The chain runs to 421 residues: Acyl-coenzyme A thioesterase 1 (421 aa).

Residues Ser-232, Asp-326, and His-360 each act as charge relay system in the active site.

This sequence belongs to the C/M/P thioester hydrolase family. In terms of assembly, monomer.

It localises to the cytoplasm. Its subcellular location is the cytosol. The catalysed reaction is hexadecanoyl-CoA + H2O = hexadecanoate + CoA + H(+). The enzyme catalyses decanoyl-CoA + H2O = decanoate + CoA + H(+). It catalyses the reaction dodecanoyl-CoA + H2O = dodecanoate + CoA + H(+). It carries out the reaction tetradecanoyl-CoA + H2O = tetradecanoate + CoA + H(+). The catalysed reaction is octadecanoyl-CoA + H2O = octadecanoate + CoA + H(+). The enzyme catalyses eicosanoyl-CoA + H2O = eicosanoate + CoA + H(+). It catalyses the reaction (9Z)-octadecenoyl-CoA + H2O = (9Z)-octadecenoate + CoA + H(+). It carries out the reaction (9Z)-hexadecenoyl-CoA + H2O = (9Z)-hexadecenoate + CoA + H(+). The catalysed reaction is (9E)-octadecenoyl-CoA + H2O = (9E)-octadecenoate + CoA + H(+). The protein operates within lipid metabolism; fatty acid metabolism. In terms of biological role, catalyzes the hydrolysis of acyl-CoAs into free fatty acids and coenzyme A (CoASH), regulating their respective intracellular levels. More active towards saturated and unsaturated long chain fatty acyl-CoAs (C12-C20). The chain is Acyl-coenzyme A thioesterase 1 (ACOT1) from Homo sapiens (Human).